Consider the following 557-residue polypeptide: TNF receptor-associated factor 5 (557 aa).

Residues 45 to 85 (CAFCHSVLHNPHQTGCGHRFCQHCILSLRELNTVPICPVDK) form an RING-type zinc finger. 2 TRAF-type zinc fingers span residues 127–181 (DHLQ…INLQ) and 182–239 (NHEE…RNLQ). Residues 237–342 (NLQQHEHSAL…VNQQQNKFDL (106 aa)) are a coiled coil. Lysine 318 is covalently cross-linked (Glycyl lysine isopeptide (Lys-Gly) (interchain with G-Cter in ubiquitin)). An interaction with EIF2AK2/PKR region spans residues 345–557 (LMEAVDTVKQ…AVDLTDLEDL (213 aa)). The region spanning 403 to 549 (NGKLIWKVTD…DDTLFLKVAV (147 aa)) is the MATH domain.

Belongs to the TNF receptor-associated factor family. A subfamily. As to quaternary structure, homotrimer. Heteromer with TRAF3. Associates with TNFRSF5/CD40 through interaction with TRAF3. Associates with LTBR/TNFRSF3, TNFRSF4, TNFRSF8/CD30, TNFRSF11A/RANK, TNFRSF13B/TACI, TNFRSF14, TNFRSF17, TNFRSF19/TROY, RIPK2, MAP3K14, MAP3K5, and TRAF and TNF receptor associated protein TDP2. Interacts (via C-terminus) with EIF2AK2/PKR (via the kinase catalytic domain). Post-translationally, ubiquitinated at Lys-318 by the SCF(FBXL2) complex, leading to its degradation by the proteasome. Expressed in spleen, thymus, prostate, testis, ovary, small intestine, colon, and peripheral blood.

It is found in the cytoplasm. The protein resides in the cytosol. Functionally, adapter protein and signal transducer that links members of the tumor necrosis factor receptor family to different signaling pathways by association with the receptor cytoplasmic domain and kinases. Mediates activation of NF-kappa-B and probably JNK. Seems to be involved in apoptosis. Plays a role in mediating activation of NF-kappa-B by EIF2AK2/PKR. In Homo sapiens (Human), this protein is TNF receptor-associated factor 5 (TRAF5).